Consider the following 484-residue polypeptide: Solute carrier family 40 member 1 (484 aa).

11 helical membrane-spanning segments follow: residues 58–78 (LLTA…GPIV), 94–114 (WLLL…ALLV), 123–143 (GFPA…LAAL), 189–209 (VLSG…ALAA), 212–232 (LAAV…FPAL), 279–299 (VVLP…FGTL), 308–328 (GIPA…GIAA), 346–366 (LWSI…VWAG), 377–397 (LMGG…AVMQ), 413–433 (GVQN…GIIV), and 442–462 (LIVL…MHVY).

It belongs to the ferroportin (FP) (TC 2.A.100) family. SLC40A subfamily.

Its subcellular location is the membrane. Its function is as follows. May be involved in iron transport and iron homeostasis. The protein is Solute carrier family 40 member 1 of Oryza sativa subsp. japonica (Rice).